A 142-amino-acid polypeptide reads, in one-letter code: Large-conductance mechanosensitive channel (142 aa).

3 consecutive transmembrane segments (helical) span residues 10-30 (FAVK…GAFG), 40-60 (LIMP…LFVV), and 86-106 (GNFI…FMMV).

This sequence belongs to the MscL family. Homopentamer.

It localises to the cell inner membrane. In terms of biological role, channel that opens in response to stretch forces in the membrane lipid bilayer. May participate in the regulation of osmotic pressure changes within the cell. In Delftia acidovorans (strain DSM 14801 / SPH-1), this protein is Large-conductance mechanosensitive channel.